The sequence spans 632 residues: Thioredoxin domain-containing protein C959.05c (632 aa).

A signal peptide spans 1-22; the sequence is MKLFLYHFTFIVYYFIISFSYA. N-linked (GlcNAc...) asparagine glycosylation is found at N35, N41, and N140. The 132-residue stretch at 153-284 folds into the Thioredoxin domain; the sequence is SDSSSTDPAF…LLSYSNQVAS (132 aa). C209 and C212 are joined by a disulfide. An N-linked (GlcNAc...) asparagine glycan is attached at N557. A helical transmembrane segment spans residues 583-603; that stretch reads LIVFNLLIALLILSILTIISA.

The protein belongs to the protein disulfide isomerase family.

Its subcellular location is the endoplasmic reticulum membrane. It carries out the reaction Catalyzes the rearrangement of -S-S- bonds in proteins.. Functionally, acts as a membrane-bound chaperone in endoplasmic reticulum quality control. Probably facilitates presentation of substrate to membrane-bound components of the degradation machinery. This Schizosaccharomyces pombe (strain 972 / ATCC 24843) (Fission yeast) protein is Thioredoxin domain-containing protein C959.05c.